We begin with the raw amino-acid sequence, 473 residues long: Cell division protein FtsZ homolog 2-2, chloroplastic (473 aa).

Residues G124 to N128, G213 to G215, E244, and R248 contribute to the GTP site. Phosphothreonine; by PGK1 is present on T282. Residue D292 participates in GTP binding. The interval E424–S455 is disordered. The segment covering R445–S454 has biased composition (polar residues).

Belongs to the FtsZ family. In terms of assembly, aggregates to form a contractile ring-like structure; contraction of the ring was accompanied by an increase in the filament turnover rate. Self-interacts and binds to FTSZ1 in heteropolymers to form two morphologically distinct types of filaments, termed type-I (smooth filaments) and -II (rough filaments), in a GTP-dependent manner. Part of a complex made of ARC3, ARC6, FTSZ1 and FTSZ2. Interacts (via C-terminus) with ARC6. Interacts with CDP1/PARC6. Binds to PGK1. Phosphorylation at Thr-282 is required for the formation of contractile ring at the chloroplast midpoint.

The protein localises to the plastid. It is found in the chloroplast stroma. The protein resides in the chloroplast thylakoid membrane. Exhibits GTPase activity. Component of the plastid division machinery that forms a contractile ring at the division site. Contributes to plastid division in the vegetative shoot apex, at the shoot apical meristem (SAM) where the proplastid-to-chloroplast transition takes place. The protein is Cell division protein FtsZ homolog 2-2, chloroplastic of Arabidopsis thaliana (Mouse-ear cress).